The sequence spans 617 residues: Chaperone protein DnaK (617 aa).

At T175 the chain carries Phosphothreonine; by autocatalysis. Residues 578 to 592 (AGAEAQQGAQGTQGA) show a composition bias toward low complexity. A disordered region spans residues 578–617 (AGAEAQQGAQGTQGADMGGNAQGKDDDNVVDADFKVEDDK). Residues 600–617 (GKDDDNVVDADFKVEDDK) show a composition bias toward basic and acidic residues.

Belongs to the heat shock protein 70 family.

Its function is as follows. Acts as a chaperone. The sequence is that of Chaperone protein DnaK from Clostridium novyi (strain NT).